A 412-amino-acid polypeptide reads, in one-letter code: Imidazolonepropionase (412 aa).

Residues His76 and His78 each contribute to the Fe(3+) site. Zn(2+) contacts are provided by His76 and His78. Positions 85, 148, and 181 each coordinate 4-imidazolone-5-propanoate. Residue Tyr148 coordinates N-formimidoyl-L-glutamate. His242 provides a ligand contact to Fe(3+). A Zn(2+)-binding site is contributed by His242. Residue Glu245 coordinates 4-imidazolone-5-propanoate. Asp317 contacts Fe(3+). Asp317 is a Zn(2+) binding site. Residues Asn319 and Gly321 each contribute to the N-formimidoyl-L-glutamate site. Ser322 contributes to the 4-imidazolone-5-propanoate binding site.

The protein belongs to the metallo-dependent hydrolases superfamily. HutI family. The cofactor is Zn(2+). Fe(3+) serves as cofactor.

The protein localises to the cytoplasm. The catalysed reaction is 4-imidazolone-5-propanoate + H2O = N-formimidoyl-L-glutamate. The protein operates within amino-acid degradation; L-histidine degradation into L-glutamate; N-formimidoyl-L-glutamate from L-histidine: step 3/3. Functionally, catalyzes the hydrolytic cleavage of the carbon-nitrogen bond in imidazolone-5-propanoate to yield N-formimidoyl-L-glutamate. It is the third step in the universal histidine degradation pathway. This chain is Imidazolonepropionase, found in Staphylococcus aureus (strain bovine RF122 / ET3-1).